A 328-amino-acid chain; its full sequence is Cell cycle control protein 50A (328 aa).

A disordered region spans residues 1–28 (MAMNYSAKDEVDGGPTGPPGGAAKTRRP). Alanine 2 carries the post-translational modification N-acetylalanine. Residues 2–48 (AMNYSAKDEVDGGPTGPPGGAAKTRRPDNTAFKQQRLPAWQPILTAG) form a required for ATPase and aminophospholipid flippase activity region. The Cytoplasmic portion of the chain corresponds to 2–49 (AMNYSAKDEVDGGPTGPPGGAAKTRRPDNTAFKQQRLPAWQPILTAGT). Residues 49–315 (TVLPTFFIIG…LGVVLLVINH (267 aa)) are interaction with ATP8A2. The helical transmembrane segment at 50–70 (VLPTFFIIGLIFIPIGIGIFV) threads the bilayer. The Exoplasmic loop segment spans residues 71 to 292 (TSNNIREIEG…SWMGGKNPFL (222 aa)). Residues 102-125 (RDDSQLNGDPSALLNPSKECEPYR) are disordered. Cysteine 121 and cysteine 135 are joined by a disulfide. Residues asparagine 144 and asparagine 261 are each glycosylated (N-linked (GlcNAc...) asparagine). Residues 293-313 (GIAYITIGSISFLLGVVLLVI) form a helical membrane-spanning segment. Topologically, residues 314-328 (NHKYRNSSNTADITI) are cytoplasmic.

It belongs to the CDC50/LEM3 family. In terms of assembly, component of various P4-ATPase flippase complexes which consists of a catalytic alpha subunit and an accessory beta subunit. Interacts with ATP8A1 to form a flippase complex; this complex forms an intermediate phosphoenzyme. Interacts with ATP8A2 to form a flippase complex. TP8B1:TMEM30A and ATP8B2:TMEM30A flippase complexes have been shown to form intermediate phosphoenzymes in vitro. Interacts with alpha subunits ATP8A1, ATP8B1, ATP8B2, ATP8B4, ATP10A, ATP10B, ATP10D, ATP11A, ATP11B and ATP11C. Post-translationally, N-glycosylated. Contains high mannose-type oligosaccharides.

Its subcellular location is the membrane. It localises to the golgi apparatus. The protein localises to the cytoplasmic vesicle. The protein resides in the secretory vesicle membrane. It is found in the apical cell membrane. Its subcellular location is the photoreceptor inner segment. It localises to the cell projection. The protein localises to the cilium. The protein resides in the photoreceptor outer segment. Its function is as follows. Accessory component of a P4-ATPase flippase complex which catalyzes the hydrolysis of ATP coupled to the transport of aminophospholipids from the outer to the inner leaflet of various membranes and ensures the maintenance of asymmetric distribution of phospholipids. Phospholipid translocation also seems to be implicated in vesicle formation and in uptake of lipid signaling molecules. The beta subunit may assist in binding of the phospholipid substrate. Required for the proper folding, assembly and ER to Golgi exit of the ATP8A2:TMEM30A flippase complex. ATP8A2:TMEM30A may be involved in regulation of neurite outgrowth, and, reconstituted to liposomes, predomiminantly transports phosphatidylserine (PS) and to a lesser extent phosphatidylethanolamine (PE). The ATP8A1:TMEM30A flippase complex seems to play a role in regulation of cell migration probably involving flippase-mediated translocation of phosphatidylethanolamine (PE) at the plasma membrane. Required for the formation of the ATP8A2, ATP8B1 and ATP8B2 P-type ATPAse intermediate phosphoenzymes. Involved in uptake of platelet-activating factor (PAF). Can also mediate the export of alpha subunits ATP8A1, ATP8B1, ATP8B2, ATP8B4, ATP10A, ATP10B, ATP10D, ATP11A, ATP11B and ATP11C from ER to other membrane localizations. The polypeptide is Cell cycle control protein 50A (Rattus norvegicus (Rat)).